Here is a 461-residue protein sequence, read N- to C-terminus: 3-isopropylmalate dehydratase large subunit (461 aa).

3 residues coordinate [4Fe-4S] cluster: Cys-338, Cys-398, and Cys-401.

The protein belongs to the aconitase/IPM isomerase family. LeuC type 1 subfamily. Heterodimer of LeuC and LeuD. [4Fe-4S] cluster is required as a cofactor.

It carries out the reaction (2R,3S)-3-isopropylmalate = (2S)-2-isopropylmalate. The protein operates within amino-acid biosynthesis; L-leucine biosynthesis; L-leucine from 3-methyl-2-oxobutanoate: step 2/4. Catalyzes the isomerization between 2-isopropylmalate and 3-isopropylmalate, via the formation of 2-isopropylmaleate. The protein is 3-isopropylmalate dehydratase large subunit of Streptococcus mutans serotype c (strain ATCC 700610 / UA159).